Here is a 421-residue protein sequence, read N- to C-terminus: L-evernosamine nitrososynthase (421 aa).

It belongs to the acyl-CoA dehydrogenase family. Homotetramer. FAD serves as cofactor.

The enzyme catalyses dTDP-beta-L-evernosamine + 2 NADPH + 2 O2 + H(+) = dTDP-2,3,6-trideoxy-3-C-methyl-4-O-methyl-3-nitroso-beta-L-arabino-hexopyranose + 2 NADP(+) + 3 H2O. The catalysed reaction is dTDP-beta-L-evernosamine + NADPH + O2 = dTDP-N-hydroxy-beta-L-evernosamine + NADP(+) + H2O. It catalyses the reaction dTDP-N-hydroxy-beta-L-evernosamine + NADPH + O2 + H(+) = dTDP-2,3,6-trideoxy-3-C-methyl-4-O-methyl-3-nitroso-beta-L-arabino-hexopyranose + NADP(+) + 2 H2O. Its pathway is antibiotic biosynthesis. In terms of biological role, nitrososynthase involved in the biosynthesis of everninomicin, a broad spectrum orthosomycin antibiotic. Catalyzes the double-oxidation of TDP-L-evernosamine to TDP-L-evernitrosose. The enzyme first oxidizes the substrate to a transient hydroxylamino intermediate, which is then further oxidized to nitroso sugar. The nitroso group is probably spontaneously oxidized giving TDP-L-evernitrose. In vitro, catalyzes the double-oxidation of TDP-L-epi-vancosamine to TDP-L-epi-vancosonitrose. Can also use biosynthetic progenitors of TDP-L-epi-vancosamine, but progenitors solely undergo single-oxidation reactions and terminate in the hydroxylamine oxidation state. The protein is L-evernosamine nitrososynthase of Micromonospora sp. (strain ATCC 39149 / NRRL 15099 / SCC 1413).